Here is a 1201-residue protein sequence, read N- to C-terminus: DNA-directed RNA polymerase subunit beta (1201 aa).

The segment at 1165–1201 (DALSKFKQQQDEKAADKAAKADAAKPSETTNAQQDNQ) is disordered. Over residues 1172-1189 (QQQDEKAADKAAKADAAK) the composition is skewed to basic and acidic residues. The segment covering 1191–1201 (SETTNAQQDNQ) has biased composition (polar residues).

The protein belongs to the RNA polymerase beta chain family. In terms of assembly, the RNAP catalytic core consists of 2 alpha, 1 beta, 1 beta' and 1 omega subunit. When a sigma factor is associated with the core the holoenzyme is formed, which can initiate transcription.

It catalyses the reaction RNA(n) + a ribonucleoside 5'-triphosphate = RNA(n+1) + diphosphate. DNA-dependent RNA polymerase catalyzes the transcription of DNA into RNA using the four ribonucleoside triphosphates as substrates. This chain is DNA-directed RNA polymerase subunit beta, found in Lactiplantibacillus plantarum (strain ATCC BAA-793 / NCIMB 8826 / WCFS1) (Lactobacillus plantarum).